The sequence spans 396 residues: Proteasome-activating nucleotidase (396 aa).

Residues 16 to 57 (VTYLKRRIRQLELQVRMLEADKERLERELSRLRSEMSRLRQP) adopt a coiled-coil conformation. ATP contacts are provided by residues 181–186 (GCGKTL) and H320. A docks into pockets in the proteasome alpha-ring to cause gate opening region spans residues 394 to 396 (IYG).

Belongs to the AAA ATPase family. Homohexamer. The hexameric complex has a two-ring architecture resembling a top hat that caps the 20S proteasome core at one or both ends. Upon ATP-binding, the C-terminus of PAN interacts with the alpha-rings of the proteasome core by binding to the intersubunit pockets.

The protein resides in the cytoplasm. In terms of biological role, ATPase which is responsible for recognizing, binding, unfolding and translocation of substrate proteins into the archaeal 20S proteasome core particle. Is essential for opening the gate of the 20S proteasome via an interaction with its C-terminus, thereby allowing substrate entry and access to the site of proteolysis. Thus, the C-termini of the proteasomal ATPase function like a 'key in a lock' to induce gate opening and therefore regulate proteolysis. Unfolding activity requires energy from ATP hydrolysis, whereas ATP binding alone promotes ATPase-20S proteasome association which triggers gate opening, and supports translocation of unfolded substrates. This chain is Proteasome-activating nucleotidase, found in Pyrococcus furiosus (strain ATCC 43587 / DSM 3638 / JCM 8422 / Vc1).